Consider the following 199-residue polypeptide: Ribosome maturation factor RimM (199 aa).

The 77-residue stretch at 93–169 (DDEYYHADLI…IELPDEIDGE (77 aa)) folds into the PRC barrel domain. A disordered region spans residues 164–199 (DEIDGEDRASADESASAEDDAAAPNSARHPRESGDP).

This sequence belongs to the RimM family. In terms of assembly, binds ribosomal protein uS19.

The protein localises to the cytoplasm. In terms of biological role, an accessory protein needed during the final step in the assembly of 30S ribosomal subunit, possibly for assembly of the head region. Essential for efficient processing of 16S rRNA. May be needed both before and after RbfA during the maturation of 16S rRNA. It has affinity for free ribosomal 30S subunits but not for 70S ribosomes. This is Ribosome maturation factor RimM from Bradyrhizobium sp. (strain ORS 278).